Here is a 587-residue protein sequence, read N- to C-terminus: Barrierpepsin (587 aa).

Positions 1–24 are cleaved as a signal peptide; that stretch reads MSAINHLCLKLILASFAIINTITA. The Peptidase A1 domain occupies 45-393; the sequence is YATTLDIGTP…DLDNYKISLA (349 aa). Aspartate 63 is a catalytic residue. Asparagine 84, asparagine 90, and asparagine 268 each carry an N-linked (GlcNAc...) asparagine glycan. The active site involves aspartate 287. N-linked (GlcNAc...) asparagine glycosylation occurs at asparagine 308. Cysteine 322 and cysteine 358 are disulfide-bonded. N-linked (GlcNAc...) asparagine glycans are attached at residues asparagine 366, asparagine 398, asparagine 468, asparagine 503, and asparagine 551. The segment at 466-505 is disordered; that stretch reads SRNCSTKMPGTRSTTVLSKPTQNSAMHQSTGAVTQTSNET.

This sequence belongs to the peptidase A1 family.

It is found in the secreted. The catalysed reaction is Selective cleavage of 6-Leu-|-Lys-7 bond in the pheromone alpha-mating factor.. Functionally, this protein called 'barrier activity' is excreted by yeast cells mating type a. It is probably a protease that cleaves alpha-factor and thus acts as an antagonist of this mating pheromone and establishes optimal pheromone concentration for conjugation. The chain is Barrierpepsin (BAR1) from Saccharomyces cerevisiae (strain ATCC 204508 / S288c) (Baker's yeast).